Consider the following 1251-residue polypeptide: ATP-dependent helicase/nuclease subunit A (1251 aa).

The UvrD-like helicase ATP-binding domain occupies 5 to 481 (TKWTDEQWEA…IILSRNFRSR (477 aa)). 26–33 (AAAGAGKT) provides a ligand contact to ATP. One can recognise a UvrD-like helicase C-terminal domain in the interval 526–824 (TVGGEVEFHL…RIMSIHKSKG (299 aa)). Residues 544-565 (NFTFENEGEEGRQADEGEEDEE) are disordered.

This sequence belongs to the helicase family. AddA subfamily. Heterodimer of AddA and AddB/RexB. The cofactor is Mg(2+).

It carries out the reaction Couples ATP hydrolysis with the unwinding of duplex DNA by translocating in the 3'-5' direction.. The enzyme catalyses ATP + H2O = ADP + phosphate + H(+). The heterodimer acts as both an ATP-dependent DNA helicase and an ATP-dependent, dual-direction single-stranded exonuclease. Recognizes the chi site generating a DNA molecule suitable for the initiation of homologous recombination. The AddA nuclease domain is required for chi fragment generation; this subunit has the helicase and 3' -&gt; 5' nuclease activities. In Acetivibrio thermocellus (strain ATCC 27405 / DSM 1237 / JCM 9322 / NBRC 103400 / NCIMB 10682 / NRRL B-4536 / VPI 7372) (Clostridium thermocellum), this protein is ATP-dependent helicase/nuclease subunit A.